The following is a 658-amino-acid chain: UvrABC system protein B (658 aa).

The 158-residue stretch at 25 to 182 (DSIRSGNKFN…LKLVDMGYKR (158 aa)) folds into the Helicase ATP-binding domain. 38–45 (GVTGSGKT) serves as a coordination point for ATP. Residues 91-114 (YYDYYQPEAYIPRQDLFIEKDSSI) carry the Beta-hairpin motif. The region spanning 433-596 (QVEVLFDRAK…TPRSASRNLE (164 aa)) is the Helicase C-terminal domain. The UVR domain occupies 623 to 658 (AKIVKELRKQMLEAAKNLEFEKAAALRDEIAKLREL).

This sequence belongs to the UvrB family. As to quaternary structure, forms a heterotetramer with UvrA during the search for lesions. Interacts with UvrC in an incision complex.

It localises to the cytoplasm. Functionally, the UvrABC repair system catalyzes the recognition and processing of DNA lesions. A damage recognition complex composed of 2 UvrA and 2 UvrB subunits scans DNA for abnormalities. Upon binding of the UvrA(2)B(2) complex to a putative damaged site, the DNA wraps around one UvrB monomer. DNA wrap is dependent on ATP binding by UvrB and probably causes local melting of the DNA helix, facilitating insertion of UvrB beta-hairpin between the DNA strands. Then UvrB probes one DNA strand for the presence of a lesion. If a lesion is found the UvrA subunits dissociate and the UvrB-DNA preincision complex is formed. This complex is subsequently bound by UvrC and the second UvrB is released. If no lesion is found, the DNA wraps around the other UvrB subunit that will check the other stand for damage. The chain is UvrABC system protein B from Campylobacter fetus subsp. fetus (strain 82-40).